The sequence spans 320 residues: Serpentine receptor class gamma-17 (320 aa).

6 helical membrane-spanning segments follow: residues 25-45 (AIYF…ISLL), 80-100 (IFFG…STFF), 155-175 (FIML…QVIA), 192-212 (WASL…FTIV), 237-257 (FTSI…LTFA), and 268-288 (YILQ…IMFL).

This sequence belongs to the nematode receptor-like protein srg family.

It localises to the membrane. The sequence is that of Serpentine receptor class gamma-17 (srg-17) from Caenorhabditis elegans.